The following is a 290-amino-acid chain: PIH1 domain-containing protein 1 (290 aa).

Phosphoserine is present on residues S12, S16, and S173.

Belongs to the PIH1 family. As to quaternary structure, component of the R2TP complex composed at least of RUVBL1, RUVBL2, RPAP3 and PIHD1. Component of the PAQosome complex which is responsible for the biogenesis of several protein complexes and which consists of R2TP complex members RUVBL1, RUVBL2, RPAP3 and PIH1D1, URI complex members PFDN2, PFDN6, PDRG1, UXT and URI1 as well as ASDURF, POLR2E and DNAAF10/WDR92. Interacts with phosphorylated TELO2 and mediates interaction of TELO2 with the R2TP complex. Interacts with phosphorylated ECD, EFTUD2/SNRP116, RPB1 and UBR5 and with RPB1 in a phosphorylation-independent manner. Interacts with the core C/D box snoRNP particle components NOP58 and FBL and with RUVBL1/TIP49. Interacts with RPAP3 and DNAAF10. Interacts with histone H4 and with SWI/SNF complex member SMARCB1/SNF5. Interacts with the mTORC1 complex member RPTOR. Interacts with MSL1.

It is found in the nucleus. Involved in the assembly of C/D box small nucleolar ribonucleoprotein (snoRNP) particles. Recruits the SWI/SNF complex to the core promoter of rRNA genes and enhances pre-rRNA transcription. Mediates interaction of TELO2 with the R2TP complex which is necessary for the stability of MTOR and SMG1. Positively regulates the assembly and activity of the mTORC1 complex. In Rattus norvegicus (Rat), this protein is PIH1 domain-containing protein 1 (Pih1d1).